Here is a 286-residue protein sequence, read N- to C-terminus: Translocon-associated protein subunit alpha (286 aa).

The signal sequence occupies residues 1 to 20; it reads MSSLRRLLLLLLLVFPATLL. Residues 21–207 are Lumenal-facing; that stretch reads LRVGPGGSLA…EREDGLDGET (187 aa). The segment covering 37 to 75 has biased composition (acidic residues); sequence EDEETVEDSIIEDEDDEAEVEEDEPTDLAEDKEEDDVSG. The segment at 37–83 is disordered; sequence EDEETVEDSIIEDEDDEAEVEEDEPTDLAEDKEEDDVSGEPEASPSA. Asn136 and Asn191 each carry an N-linked (GlcNAc...) asparagine glycan. A helical membrane pass occupies residues 208-228; it reads IFMYMFLAGLGLLVVVGLHQL. The Cytoplasmic segment spans residues 229 to 286; that stretch reads LESRKRKRPIQKVEMGTSSQNDVDMSWIPQETLNQINKASPRRLPRKRAQKRSVGSDE. Ser247 carries the phosphoserine modification. Residue Thr260 is modified to Phosphothreonine. Residues 261 to 286 are disordered; it reads LNQINKASPRRLPRKRAQKRSVGSDE. At Ser268 the chain carries Phosphoserine. Over residues 268–279 the composition is skewed to basic residues; it reads SPRRLPRKRAQK.

This sequence belongs to the TRAP-alpha family. As to quaternary structure, heterotetramer of TRAP-alpha, TRAP-beta, TRAP-delta and TRAP-gamma. Interacts with palmitoylated calnexin (CALX), the interaction is required for efficient folding of glycosylated proteins. In terms of processing, phosphorylated in its cytoplasmic tail.

The protein localises to the endoplasmic reticulum membrane. TRAP proteins are part of a complex whose function is to bind calcium to the ER membrane and thereby regulate the retention of ER resident proteins. May be involved in the recycling of the translocation apparatus after completion of the translocation process or may function as a membrane-bound chaperone facilitating folding of translocated proteins. The sequence is that of Translocon-associated protein subunit alpha (SSR1) from Bos taurus (Bovine).